The sequence spans 398 residues: MIALRVHNTRVVSRSLTVWTRPSPTLTLSRSLATESDALDKPKTRRRKTVFTDALNSGPSFDDFVSGKASEIMDPLEAARKDPNQRLPSWLKVPIPKGKSYHNVKKDVRELKLATVCEEAKCPNIGECWGGKKSEATATIMLLGDTCTRGCRFCSVKTNRNPAKPDPMEPENTAEAISRWGLGYVVLTTVDRDDLADGGAHHLAETVMKIKQKAPQILVEVLGGDFRGDLDMATVLAKSGLDVYAHNLETVEALTPFVRDRRATYRQSLSVLQRAKETKSSLVTKTSLMLGLGETDEQILQTLKDLREINCDVVTFGQYMRPTKRHMKVVEYVTPEKFDYWRDTALEMGFLYVASGPLVRSSYKAGEAFIENVIRKRRHNVGEAPRLAQEIQPKIFRE.

The transit peptide at 1–32 (MIALRVHNTRVVSRSLTVWTRPSPTLTLSRSL) directs the protein to the mitochondrion. C117, C122, C128, C147, C151, C154, and S362 together coordinate [4Fe-4S] cluster. The Radical SAM core domain maps to 132–351 (KKSEATATIM…RDTALEMGFL (220 aa)).

It belongs to the radical SAM superfamily. Lipoyl synthase family. Requires [4Fe-4S] cluster as cofactor.

The protein resides in the mitochondrion. It catalyses the reaction [[Fe-S] cluster scaffold protein carrying a second [4Fe-4S](2+) cluster] + N(6)-octanoyl-L-lysyl-[protein] + 2 oxidized [2Fe-2S]-[ferredoxin] + 2 S-adenosyl-L-methionine + 4 H(+) = [[Fe-S] cluster scaffold protein] + N(6)-[(R)-dihydrolipoyl]-L-lysyl-[protein] + 4 Fe(3+) + 2 hydrogen sulfide + 2 5'-deoxyadenosine + 2 L-methionine + 2 reduced [2Fe-2S]-[ferredoxin]. The protein operates within protein modification; protein lipoylation via endogenous pathway; protein N(6)-(lipoyl)lysine from octanoyl-[acyl-carrier-protein]: step 2/2. In terms of biological role, catalyzes the radical-mediated insertion of two sulfur atoms into the C-6 and C-8 positions of the octanoyl moiety bound to the lipoyl domains of lipoate-dependent enzymes, thereby converting the octanoylated domains into lipoylated derivatives. This Scheffersomyces stipitis (strain ATCC 58785 / CBS 6054 / NBRC 10063 / NRRL Y-11545) (Yeast) protein is Lipoyl synthase, mitochondrial.